Consider the following 1008-residue polypeptide: Retinoblastoma-related protein (1008 aa).

The disordered stretch occupies residues 375–394 (KRKVDSMTSPTKTITSPLSP). Over residues 380–392 (SMTSPTKTITSPL) the composition is skewed to polar residues. The tract at residues 404–605 (TPVSTAMTTA…EKGSSMYNSL (202 aa)) is domain A. The segment at 404-853 (TPVSTAMTTA…NEVFIPSVKP (450 aa)) is pocket. The spacer stretch occupies residues 606–722 (TIARPNLSNE…HPTRGETCGE (117 aa)). The segment at 723–853 (TAVNLFFSKI…NEVFIPSVKP (131 aa)) is domain B. 2 disordered regions span residues 865–899 (KNPN…SLPD) and 988–1008 (LQNG…LKTE).

Belongs to the retinoblastoma protein (RB) family.

The protein localises to the nucleus. Functionally, regulator of biological processes that recruits a histone deacetylase to control gene transcription. May play a role in the entry into mitosis, negatively regulating the cell proliferation. Formation of stable complexes with geminiviridae replication-associated proteins may create a cellular environment which favors viral DNA replication. The chain is Retinoblastoma-related protein (RBR) from Pilosella officinarum (Mouse-ear hawkweed).